The sequence spans 243 residues: Voltage-gated monoatomic cation channel TMEM109 (243 aa).

The signal sequence occupies residues 1–33 (MAGAHSTPLWSRHLLKAVLMVLVALFLVHSASA). Over 34 to 83 (QSHREFASPGQQKKETSADILTQIGRSLKEMLDTWLGPETMHVISETLLQ) the chain is Lumenal. The chain crosses the membrane as a helical span at residues 84 to 104 (VMWAISSAISVACFALSGIAA). The Cytoplasmic segment spans residues 105-135 (QLLSALGLDGEQLTQGLKLSPSQVQTLLLWG). Residues 136 to 156 (AAALVIYWLLSLLLGLVLALL) form a helical membrane-spanning segment. At 157–185 (GRILGGLKLVLFVAGFVALVRSVPDPSTR) the chain is on the lumenal side. Residues 186 to 205 (ALMLLALLTLFALLSRLTGS) traverse the membrane as a helical segment. Topologically, residues 206–243 (RSSGSHLEAKVRGLERQIEELRGRQRRAAKMPRSMEEE) are cytoplasmic.

In terms of assembly, homooligomer. Interacts with CRYAB; in the cellular response to DNA damage.

It localises to the nucleus outer membrane. It is found in the endoplasmic reticulum membrane. The protein resides in the sarcoplasmic reticulum membrane. It carries out the reaction K(+)(in) = K(+)(out). The catalysed reaction is Ca(2+)(in) = Ca(2+)(out). Its function is as follows. Functions as a voltage-gated monoatomic cation channel permeable to both potassium and calcium. Plays a role in the cellular response to DNA damage. The protein is Voltage-gated monoatomic cation channel TMEM109 of Mus musculus (Mouse).